The sequence spans 206 residues: Large ribosomal subunit protein uL4 (206 aa).

Residues 48–97 (THAVKNRSLVSGGGKKPWKQKHTGRARQGSTRASQWVGGGKAMGPKPRDY) form a disordered region. Positions 63–72 (KPWKQKHTGR) are enriched in basic residues.

It belongs to the universal ribosomal protein uL4 family. In terms of assembly, part of the 50S ribosomal subunit.

Functionally, one of the primary rRNA binding proteins, this protein initially binds near the 5'-end of the 23S rRNA. It is important during the early stages of 50S assembly. It makes multiple contacts with different domains of the 23S rRNA in the assembled 50S subunit and ribosome. Forms part of the polypeptide exit tunnel. The sequence is that of Large ribosomal subunit protein uL4 from Anaeromyxobacter dehalogenans (strain 2CP-1 / ATCC BAA-258).